A 458-amino-acid chain; its full sequence is V-type sodium ATPase subunit B (458 aa).

This sequence belongs to the ATPase alpha/beta chains family.

Functionally, involved in ATP-driven sodium extrusion. This Enterococcus hirae (strain ATCC 9790 / DSM 20160 / JCM 8729 / LMG 6399 / NBRC 3181 / NCIMB 6459 / NCDO 1258 / NCTC 12367 / WDCM 00089 / R) protein is V-type sodium ATPase subunit B (ntpB).